Consider the following 376-residue polypeptide: Probable allantoicase (376 aa).

It belongs to the allantoicase family.

The enzyme catalyses allantoate + H2O = (S)-ureidoglycolate + urea. The protein operates within nitrogen metabolism; (S)-allantoin degradation; (S)-ureidoglycolate from allantoate (aminidohydrolase route): step 1/1. The protein is Probable allantoicase of Streptomyces avermitilis (strain ATCC 31267 / DSM 46492 / JCM 5070 / NBRC 14893 / NCIMB 12804 / NRRL 8165 / MA-4680).